The chain runs to 535 residues: MAAAVAAAAAVRSRILQVSSKVNSTWYPASSFSSSSVPTVKLFIDGKFVESKSDKWIDIHNPATNEVVGRVPQSTKAEMEAAVAACKRAFPAWADTSILSRQQVLLRYQQLIKENLKEIARLITLEQGKTLADAEGDVFRGLQVVEHACSVTSLMLGETMPSITKDMDLYSYRLPLGVCAGIAPFNFPAMIPLWMFPMAMVCGNTFLMKPSERVPGATMLLAKLLQDSGAPDGTLNIIHGQHEAVNFICDHPDIKAISFVGSNQAGEYIFERGSRNGKRVQANMGAKNHGVVMPDANKENTLNQLVGAAFGAAGQRCMALSTAVLVGEAKKWLPELVERAKNLRVNAGDQPGADLGPLITPQAKERVCNLIDSGAKEGASILLDGRKIKVKGYENGNFVGPTIISNVKPSMTCYKEEIFGPVLVVLETETLDEAIKIVNDNPYGNGTAIFTTNGAIARKYAHMVDVGQVGVNVPIPVPLPMFSFTGSRSSFRGDTNFYGKQGIQFYTQLKTITSQWKEEDATLSSPAVVMPTMGR.

A mitochondrion-targeting transit peptide spans 1 to 32 (MAAAVAAAAAVRSRILQVSSKVNSTWYPASSF). Residues lysine 47, lysine 52, lysine 55, and lysine 76 each carry the N6-acetyllysine; alternate modification. An N6-succinyllysine; alternate mark is found at lysine 47, lysine 52, lysine 55, and lysine 76. Lysine 87 is modified (N6-acetyllysine). Lysine 117 and lysine 129 each carry N6-acetyllysine; alternate. An N6-succinyllysine; alternate mark is found at lysine 117 and lysine 129. Residues alanine 183, phenylalanine 185, lysine 209, glutamate 212, arginine 213, and serine 262 each coordinate NAD(+). Phosphoserine is present on serine 262. Lysine 298 is modified (N6-acetyllysine). Cysteine 317 functions as the Nucleophile in the catalytic mechanism. N6-acetyllysine is present on residues lysine 330 and lysine 331. N6-acetyllysine; alternate is present on residues lysine 364 and lysine 376. N6-succinyllysine; alternate is present on residues lysine 364 and lysine 376. Serine 380 carries the post-translational modification Phosphoserine. Residue lysine 391 is modified to N6-succinyllysine. Glutamate 417 is an NAD(+) binding site. Lysine 500 is modified (N6-acetyllysine). Lysine 517 carries the N6-succinyllysine modification.

The protein belongs to the aldehyde dehydrogenase family. Homotetramer. Expressed in the head and flagellum of epididymal sperm but not in testicular sperm (at protein level). Kidney &gt; liver &gt; heart &gt; muscle &gt; brain.

The protein localises to the mitochondrion. The catalysed reaction is 3-oxopropanoate + NAD(+) + CoA + H2O = hydrogencarbonate + acetyl-CoA + NADH + H(+). It carries out the reaction 2-methyl-3-oxopropanoate + NAD(+) + CoA + H2O = propanoyl-CoA + hydrogencarbonate + NADH + H(+). It catalyses the reaction (R)-2-methyl-3-oxopropanoate + NAD(+) + CoA + H2O = propanoyl-CoA + hydrogencarbonate + NADH + H(+). The enzyme catalyses (S)-2-methyl-3-oxopropanoate + NAD(+) + CoA + H2O = propanoyl-CoA + hydrogencarbonate + NADH + H(+). Malonate and methylmalonate semialdehyde dehydrogenase involved in the catabolism of valine, thymine, and compounds catabolized by way of beta-alanine, including uracil and cytidine. The protein is Methylmalonate-semialdehyde/malonate-semialdehyde dehydrogenase [acylating], mitochondrial of Rattus norvegicus (Rat).